Consider the following 1468-residue polypeptide: MKTEFLSINDIFFLVKIGFKYVLALFNGFYLIKIVSYPNEHSIITNKMIYIGIGILLKIILIIIYWIYFMDIYILKKNCNKKFFGNIYCNSNKIIDNNISTTIIESDDFEYKKLIKKFFLKKMYYSLKKGHKIVKLYMLKIYNSDFNCYFCNTRDILYAIIWYISLYYWRRDEYNILWSFNKIPIYIYNILLILLSSSYIDLVMIIISYNKSKYHMMKSKLLIDVFFSSPSAFFFSRHFFVLENGIDIYFLMGFLRIIKVFLNVSYAKTEQSYILTNTEIKVIRIILGVLLLCNAFASTLYTIQGIHPYNIDNHDLYYILNNYLDYFYFSIISISTVGYGDIIPTNKLSRVICIFFIFWTFIWVPIQFNDLIISIFCKKETYGKLSMNNQKLILLIGDIQPEQLNTFFFESVAYGNKLKFHILTTYPINLYEEQIKIADNYCISIYIKNFDLNEKHNTNLLYSVNAQNAYYMFLFSNKFNNGHYNIDTKSFTRLLILAKFLHGEKKNAVIELRNKCVSNIVKSIGCEHFAIVNLKHSLIVKNLVCPGFITFLSNLFTAYNYNENPYYFNNSKYLHSFNFIAEFNKGSIAKIFSFAAHDNMIGLNFDKLFYKLYESLGILLIGIESSHINNNHFVYSNKKRLNFFFENVGRSMIKGNGIRDRTRKTGKIGGHKKFKFKLVYLCFLKRYIHSLSRDNCDNTQMITILNCKKNNSKMNKLNKKFYLKEIPNLLEMLNNHVHLTNKSNLSTPTWNNGIKESYKEKNIKSYHYIIDTNNINVAYKNNIPEKGKKDRGGIYIGNKHTNDTCARTNESHKNNRLRSRRSQNGKPYLGILKNCNNELFHTKKMNNYYESYRNNSNINEISIPNKRNGKPKCYLNLLGKNYFMKENDKCIVLANSKKVINYLSKAKSLFWLFEINSTKMDKVTYDLKSIIKTKQYFNKIPTSNLVKNIPIMPHMKNKSIISKHDSKIIPMDYYDLFNAYKSFRVFPQINYGITKNMLRVSYKENFNNDINNNRSIGDRSNSNSFSKLGMDKSTLSLTKFSNENSHMDSNSNDNYTVNYEHSDQAFFKGCVNWGGCNNGNTNIRENAQNEVYSINDVMNSVIKMEADKYTFEVNLNDTILVENDYNVLQKNNIKNFASIKKSNKNSNNNNKCEQIKQLNNNLTFKKNEKKTKSNKQNTNDTLERRKNGVAYSYLDACQKYFAHSAKNKKLLLLINYASNIIQLVKLINKTCKYNIIILTSEISSINIHHIYNVAFIKCKTMDDYSLLNAGLLQAEYILILPTEVNDINEINEIDMNNIILTRKITYLLKKKKKNYFINNIITELINPTNIIFLEENNMIKMTEKKSSYSDFFPYINSTQFYSSNIISETMLYNFMAHHKSFTKFPVSNSTLKCLIKDINIIYVCELRKYSDFSFKKIKTFRDLFFFLSKKCIIAIALYRKGDKYVPFYIYTKPCENCLIRFDDIVYVL.

Helical transmembrane passes span 48–68 (MIYI…YWIY), 146–165 (FNCY…WYIS), 185–209 (IYIY…IISY), 221–240 (LLID…RHFF), 246–264 (IDIY…FLNV), and 285–306 (IILG…IQGI). Residues 326–344 (YFYFSIISISTVGYGDIIP) constitute an intramembrane region (pore-forming). The helical transmembrane segment at 351 to 368 (VICIFFIFWTFIWVPIQF) threads the bilayer. The tract at residues 804 to 823 (TCARTNESHKNNRLRSRRSQ) is disordered. Residues 814–823 (NNRLRSRRSQ) are compositionally biased toward basic residues. Residues 1141-1185 (KSNKNSNNNNKCEQIKQLNNNLTFKKNEKKTKSNKQNTNDTLERR) are a coiled coil.

The protein localises to the membrane. In terms of biological role, may be involved in transmembrane potassium transport at the subcellular level not affecting bulk potassium transport across the plasma membrane. This Plasmodium berghei (strain Anka) protein is Potassium channel K2.